A 425-amino-acid chain; its full sequence is Histidine--tRNA ligase (425 aa).

It belongs to the class-II aminoacyl-tRNA synthetase family. In terms of assembly, homodimer.

It is found in the cytoplasm. It catalyses the reaction tRNA(His) + L-histidine + ATP = L-histidyl-tRNA(His) + AMP + diphosphate + H(+). In Shewanella oneidensis (strain ATCC 700550 / JCM 31522 / CIP 106686 / LMG 19005 / NCIMB 14063 / MR-1), this protein is Histidine--tRNA ligase.